The following is a 432-amino-acid chain: Amino-acid acetyltransferase (432 aa).

One can recognise an N-acetyltransferase domain in the interval 286–425; sequence EKLREATIED…ASLYNYQRQS (140 aa).

This sequence belongs to the acetyltransferase family. ArgA subfamily.

It localises to the cytoplasm. It carries out the reaction L-glutamate + acetyl-CoA = N-acetyl-L-glutamate + CoA + H(+). It participates in amino-acid biosynthesis; L-arginine biosynthesis; N(2)-acetyl-L-ornithine from L-glutamate: step 1/4. This is Amino-acid acetyltransferase from Azotobacter vinelandii (strain DJ / ATCC BAA-1303).